An 88-amino-acid polypeptide reads, in one-letter code: Small ribosomal subunit protein bS18 (88 aa).

Residues 1-26 (MAFAQSGGAGGGGGQRRPFFRRRKTC) are disordered.

This sequence belongs to the bacterial ribosomal protein bS18 family. In terms of assembly, part of the 30S ribosomal subunit. Forms a tight heterodimer with protein bS6.

Functionally, binds as a heterodimer with protein bS6 to the central domain of the 16S rRNA, where it helps stabilize the platform of the 30S subunit. The protein is Small ribosomal subunit protein bS18 of Xanthobacter autotrophicus (strain ATCC BAA-1158 / Py2).